Consider the following 273-residue polypeptide: Undecaprenyl-diphosphatase (273 aa).

A run of 9 helical transmembrane segments spans residues 1-21 (MEPIQGVVLGIIQGLTEFLPV), 39-59 (PALFFDVSLHMGTLLAVLIVF), 63-83 (LGMMAVSVGRGIVAMFGGIAP), 92-112 (LKLALLIVVGSVPTAILGLGL), 118-138 (LFFSLPLVGAMLLVTGTLLWL), 165-185 (GLAVLPGISRSGATIAAGLFL), 195-215 (FSFLLCIPAIVGAELLSAVDL), 225-245 (ATVLGSLTAFVVGYGALKVLI), and 252-272 (RFYLFAPYCFILGGVTLWIGM).

Belongs to the UppP family.

The protein localises to the cell inner membrane. It carries out the reaction di-trans,octa-cis-undecaprenyl diphosphate + H2O = di-trans,octa-cis-undecaprenyl phosphate + phosphate + H(+). Its function is as follows. Catalyzes the dephosphorylation of undecaprenyl diphosphate (UPP). Confers resistance to bacitracin. This Desulfosudis oleivorans (strain DSM 6200 / JCM 39069 / Hxd3) (Desulfococcus oleovorans) protein is Undecaprenyl-diphosphatase.